The sequence spans 530 residues: Pyridoxine/pyridoxamine 5'-phosphate oxidase 1, chloroplastic (530 aa).

Residues 1-64 constitute a chloroplast transit peptide; that stretch reads MRNVIRRVTT…TLCTKVIIPN (64 aa). The residue at position 65 (Met65) is an N-acetylmethionine. The YjeF N-terminal domain occupies 81 to 297; it reads AAEIDETLMG…SVAEKYKLEL (217 aa). 131-135 provides a ligand contact to (6S)-NADPHX; sequence NNGGD. 2 residues coordinate K(+): Asn132 and Asp196. (6S)-NADPHX contacts are provided by residues 200 to 206 and Asp238; that span reads GFSFHGA. Position 241 (Ser241) interacts with K(+). Residue 247–250 coordinates pyridoxal 5'-phosphate; the sequence is EGDH. 321–324 is a substrate binding site; the sequence is RVNY. Residue 325-327 coordinates pyridoxal 5'-phosphate; the sequence is VSP. 374 to 377 serves as a coordination point for FMN; it reads RMVL. Residue Lys379 participates in pyridoxal 5'-phosphate binding. Residues 389 to 390, 395 to 396, and Gln418 each bind FMN; these read FT and KK. Pyridoxal 5'-phosphate is bound by residues Tyr436, Arg440, and Ser444. FMN-binding positions include 453–454 and Trp499; that span reads QS. 505–507 provides a ligand contact to pyridoxal 5'-phosphate; it reads RLH. Arg509 contributes to the FMN binding site.

The protein in the N-terminal section; belongs to the NnrE/AIBP family. It in the C-terminal section; belongs to the pyridoxamine 5'-phosphate oxidase family. In terms of assembly, homodimer. FMN serves as cofactor. The cofactor is K(+). In terms of tissue distribution, expressed in leaves, stems, flowers and roots.

The protein localises to the plastid. It localises to the chloroplast. The enzyme catalyses pyridoxamine 5'-phosphate + O2 + H2O = pyridoxal 5'-phosphate + H2O2 + NH4(+). The catalysed reaction is pyridoxine 5'-phosphate + O2 = pyridoxal 5'-phosphate + H2O2. It catalyses the reaction (6R)-NADHX = (6S)-NADHX. It carries out the reaction (6R)-NADPHX = (6S)-NADPHX. The protein operates within cofactor metabolism; pyridoxal 5'-phosphate salvage; pyridoxal 5'-phosphate from pyridoxamine 5'-phosphate: step 1/1. It functions in the pathway cofactor metabolism; pyridoxal 5'-phosphate salvage; pyridoxal 5'-phosphate from pyridoxine 5'-phosphate: step 1/1. In terms of biological role, catalyzes the oxidation of either pyridoxine 5'-phosphate (PNP) or pyridoxamine 5'-phosphate (PMP) into pyridoxal 5'-phosphate (PLP). Involved in the PLP salvage pathway. Has a higher preference for PNP over PMP. May also catalyze the epimerization of the S- and R-forms of NAD(P)HX, a damaged form of NAD(P)H that is a result of enzymatic or heat-dependent hydration. This is a prerequisite for the S-specific NAD(P)H-hydrate dehydratase to allow the repair of both epimers of NAD(P)HX. This Arabidopsis thaliana (Mouse-ear cress) protein is Pyridoxine/pyridoxamine 5'-phosphate oxidase 1, chloroplastic (PPOX1).